A 533-amino-acid polypeptide reads, in one-letter code: CTP synthase (533 aa).

Residues 1–264 form an amidoligase domain region; it reads MKYIFVTGGV…GKLVTEKLNL (264 aa). Position 12 (Ser12) interacts with CTP. Ser12 is a binding site for UTP. Residues 13 to 18 and Asp70 contribute to the ATP site; that span reads SLGKGI. The Mg(2+) site is built by Asp70 and Glu138. CTP contacts are provided by residues 145-147, 185-190, and Lys221; these read DIE and KTKPTQ. Residues 185–190 and Lys221 each bind UTP; that span reads KTKPTQ. Position 237–239 (237–239) interacts with ATP; that stretch reads KDA. The region spanning 289–533 is the Glutamine amidotransferase type-1 domain; that stretch reads TIGIVGKYIE…HGLVKASIEK (245 aa). Gly357 lines the L-glutamine pocket. The Nucleophile; for glutamine hydrolysis role is filled by Cys384. Residues 385–388, Glu407, and Arg464 contribute to the L-glutamine site; that span reads LGMQ. Active-site residues include His509 and Glu511.

This sequence belongs to the CTP synthase family. Homotetramer.

The catalysed reaction is UTP + L-glutamine + ATP + H2O = CTP + L-glutamate + ADP + phosphate + 2 H(+). It carries out the reaction L-glutamine + H2O = L-glutamate + NH4(+). It catalyses the reaction UTP + NH4(+) + ATP = CTP + ADP + phosphate + 2 H(+). It participates in pyrimidine metabolism; CTP biosynthesis via de novo pathway; CTP from UDP: step 2/2. Its activity is regulated as follows. Allosterically activated by GTP, when glutamine is the substrate; GTP has no effect on the reaction when ammonia is the substrate. The allosteric effector GTP functions by stabilizing the protein conformation that binds the tetrahedral intermediate(s) formed during glutamine hydrolysis. Inhibited by the product CTP, via allosteric rather than competitive inhibition. Functionally, catalyzes the ATP-dependent amination of UTP to CTP with either L-glutamine or ammonia as the source of nitrogen. Regulates intracellular CTP levels through interactions with the four ribonucleotide triphosphates. This chain is CTP synthase, found in Methanococcus maripaludis (strain DSM 14266 / JCM 13030 / NBRC 101832 / S2 / LL).